Reading from the N-terminus, the 1453-residue chain is Clustered mitochondria protein homolog (1453 aa).

Residues 78-101 show a composition bias toward polar residues; that stretch reads LSENGQENSPHNSDSGHETSSPDS. Positions 78-110 are disordered; that stretch reads LSENGQENSPHNSDSGHETSSPDSPLTPIEEGA. In terms of domain architecture, Clu spans 439–690; the sequence is EDGIRAEDCT…RTFPPDVNYL (252 aa). Residues 979–1015 are disordered; the sequence is PLTPSNEEVSMPINSVKKSRSSKRRKQISSGGKENDD. A compositionally biased stretch (basic residues) spans 995 to 1005; it reads KKSRSSKRRKQ. TPR repeat units lie at residues 1235-1268 and 1277-1310; these read AEIDGNIGVILYAVQEFDDALKFLQNALKLHQIY and ALIYHLLARTYSCRGDFRTALQMEKETFTIYSKT.

This sequence belongs to the CLU family.

It is found in the cytoplasm. In terms of biological role, mRNA-binding protein involved in proper cytoplasmic distribution of mitochondria. This chain is Clustered mitochondria protein homolog, found in Brugia malayi (Filarial nematode worm).